Reading from the N-terminus, the 550-residue chain is PAB1-binding protein 1 (550 aa).

Residues arginine 11–lysine 95 enclose the Sm domain. Disordered stretches follow at residues histidine 201 to methionine 296 and glycine 441 to lysine 550. Positions aspartate 214–proline 223 are enriched in basic and acidic residues. Low complexity predominate over residues alanine 244–proline 262. The span at alanine 263–alanine 281 shows a compositional bias: pro residues.

Belongs to the ataxin-2 family. In terms of assembly, forms a complex composed of at least MKT1, PBP1, XAC1 and LSM12. Forms a complex composed of at least MKT1L, PBP1, XAC1 and LSM12. Within the complex, interacts with MKT1 (via C-terminus); the interaction is direct. Interacts (via C-terminus) with ZC3H11; the interaction is direct.

It localises to the cytoplasm. Its subcellular location is the cytosol. It is found in the stress granule. Involved in post-transcriptional regulation of gene expression. Promotes mRNA stabilization by bridging poly(A)-binding protein to mRNAs. This is PAB1-binding protein 1 from Trypanosoma brucei brucei (strain 927/4 GUTat10.1).